A 580-amino-acid polypeptide reads, in one-letter code: Probable inactive 1-aminocyclopropane-1-carboxylate synthase-like protein 2 (580 aa).

The tract at residues 1–43 is disordered; that stretch reads MSENRNEGSSQAAKANSDTQTPSHFKVTHPRLRDQLKKKSSKK. Residues 7–23 are compositionally biased toward polar residues; it reads EGSSQAAKANSDTQTPS. N6-(pyridoxal phosphate)lysine is present on Lys417.

Belongs to the class-I pyridoxal-phosphate-dependent aminotransferase family.

In Mus musculus (Mouse), this protein is Probable inactive 1-aminocyclopropane-1-carboxylate synthase-like protein 2 (Accsl).